A 400-amino-acid chain; its full sequence is Elongation factor Tu (400 aa).

The 200-residue stretch at 10-209 folds into the tr-type G domain; sequence KEHVNIGTIG…QVDNWIDAPL (200 aa). The segment at 19-26 is G1; sequence GHVDHGKT. 19–26 is a GTP binding site; sequence GHVDHGKT. Thr-26 contacts Mg(2+). A G2 region spans residues 61-65; sequence GITIN. Residues 82 to 85 are G3; it reads DCPG. Residues 82–86 and 137–140 each bind GTP; these read DCPGH and NKVD. Residues 137–140 are G4; it reads NKVD. The interval 179 to 181 is G5; it reads SAL.

It belongs to the TRAFAC class translation factor GTPase superfamily. Classic translation factor GTPase family. EF-Tu/EF-1A subfamily. As to quaternary structure, monomer.

The protein localises to the cytoplasm. It catalyses the reaction GTP + H2O = GDP + phosphate + H(+). Its function is as follows. GTP hydrolase that promotes the GTP-dependent binding of aminoacyl-tRNA to the A-site of ribosomes during protein biosynthesis. In Mycoplasma mobile (strain ATCC 43663 / 163K / NCTC 11711) (Mesomycoplasma mobile), this protein is Elongation factor Tu.